The primary structure comprises 220 residues: Large ribosomal subunit protein uL3 (220 aa).

It belongs to the universal ribosomal protein uL3 family. In terms of assembly, part of the 50S ribosomal subunit. Forms a cluster with proteins L14 and L19.

In terms of biological role, one of the primary rRNA binding proteins, it binds directly near the 3'-end of the 23S rRNA, where it nucleates assembly of the 50S subunit. This chain is Large ribosomal subunit protein uL3, found in Staphylococcus carnosus (strain TM300).